Here is a 403-residue protein sequence, read N- to C-terminus: Lipid droplet-regulating VLDL assembly factor AUP1 (403 aa).

Residues 1-21 (MEQPSVESLLELRRFPRKQLS) are Cytoplasmic-facing. The stretch at 22 to 42 (LILLLLYSPLGLCLFLIRLFI) is an intramembrane region. Residues 43-399 (GAHVFLVSCV…GSVGREEEEK (357 aa)) are Cytoplasmic-facing. A CUE domain is found at 286–328 (TQMQMAQHVKEVLPQVPLSAIHRDLGHTGCIDTTITNFLEGRV).

It belongs to the AUP1 family.

The protein localises to the endoplasmic reticulum membrane. Its subcellular location is the lipid droplet. Plays a role in the translocation of terminally misfolded proteins from the endoplasmic reticulum lumen to the cytoplasm and their degradation by the proteasome. Plays a role in lipid droplet formation. Induces lipid droplet clustering. The sequence is that of Lipid droplet-regulating VLDL assembly factor AUP1 from Xenopus tropicalis (Western clawed frog).